The primary structure comprises 111 residues: Large ribosomal subunit protein uL22 (111 aa).

Belongs to the universal ribosomal protein uL22 family. Part of the 50S ribosomal subunit.

In terms of biological role, this protein binds specifically to 23S rRNA; its binding is stimulated by other ribosomal proteins, e.g. L4, L17, and L20. It is important during the early stages of 50S assembly. It makes multiple contacts with different domains of the 23S rRNA in the assembled 50S subunit and ribosome. The globular domain of the protein is located near the polypeptide exit tunnel on the outside of the subunit, while an extended beta-hairpin is found that lines the wall of the exit tunnel in the center of the 70S ribosome. The sequence is that of Large ribosomal subunit protein uL22 from Acidithiobacillus ferrooxidans (strain ATCC 23270 / DSM 14882 / CIP 104768 / NCIMB 8455) (Ferrobacillus ferrooxidans (strain ATCC 23270)).